A 430-amino-acid chain; its full sequence is Adenylosuccinate synthetase (430 aa).

GTP-binding positions include 13 to 19 (GDEGKGK) and 41 to 43 (GHT). Asp14 functions as the Proton acceptor in the catalytic mechanism. Mg(2+) contacts are provided by Asp14 and Gly41. Residues 14–17 (DEGK), 39–42 (NAGH), Thr130, Arg144, Gln225, Thr240, and Arg304 each bind IMP. His42 functions as the Proton donor in the catalytic mechanism. 300-306 (ATTGRAR) lines the substrate pocket. Residues Arg306, 332–334 (KLD), and 414–416 (STG) contribute to the GTP site.

Belongs to the adenylosuccinate synthetase family. In terms of assembly, homodimer. The cofactor is Mg(2+).

The protein localises to the cytoplasm. It carries out the reaction IMP + L-aspartate + GTP = N(6)-(1,2-dicarboxyethyl)-AMP + GDP + phosphate + 2 H(+). Its pathway is purine metabolism; AMP biosynthesis via de novo pathway; AMP from IMP: step 1/2. Its function is as follows. Plays an important role in the de novo pathway of purine nucleotide biosynthesis. Catalyzes the first committed step in the biosynthesis of AMP from IMP. In Pseudomonas paraeruginosa (strain DSM 24068 / PA7) (Pseudomonas aeruginosa (strain PA7)), this protein is Adenylosuccinate synthetase.